A 302-amino-acid polypeptide reads, in one-letter code: Succinate--CoA ligase [ADP-forming] subunit alpha (302 aa).

Residues 17 to 20 (TGST), Lys43, and 96 to 98 (ITE) contribute to the CoA site. Tyr159 is a substrate binding site. Residue His247 is the Tele-phosphohistidine intermediate of the active site.

It belongs to the succinate/malate CoA ligase alpha subunit family. Heterotetramer of two alpha and two beta subunits.

It catalyses the reaction succinate + ATP + CoA = succinyl-CoA + ADP + phosphate. The catalysed reaction is GTP + succinate + CoA = succinyl-CoA + GDP + phosphate. Its pathway is carbohydrate metabolism; tricarboxylic acid cycle; succinate from succinyl-CoA (ligase route): step 1/1. In terms of biological role, succinyl-CoA synthetase functions in the citric acid cycle (TCA), coupling the hydrolysis of succinyl-CoA to the synthesis of either ATP or GTP and thus represents the only step of substrate-level phosphorylation in the TCA. The alpha subunit of the enzyme binds the substrates coenzyme A and phosphate, while succinate binding and nucleotide specificity is provided by the beta subunit. This chain is Succinate--CoA ligase [ADP-forming] subunit alpha, found in Staphylococcus aureus (strain MRSA252).